Consider the following 167-residue polypeptide: Mitochondrial inner membrane protease subunit 1 (167 aa).

Residues serine 40 and lysine 83 contribute to the active site.

It belongs to the peptidase S26 family. IMP1 subfamily. In terms of assembly, heterodimer of 2 subunits, IMMPL1 and IMMPL2.

It is found in the mitochondrion inner membrane. Catalyzes the removal of transit peptides required for the targeting of proteins from the mitochondrial matrix, across the inner membrane, into the inter-membrane space. The sequence is that of Mitochondrial inner membrane protease subunit 1 (immp1l) from Xenopus tropicalis (Western clawed frog).